Consider the following 206-residue polypeptide: Thymidylate kinase (206 aa).

Residue 11 to 18 coordinates ATP; sequence GIDGAGKT.

The protein belongs to the thymidylate kinase family.

The catalysed reaction is dTMP + ATP = dTDP + ADP. Its function is as follows. Phosphorylation of dTMP to form dTDP in both de novo and salvage pathways of dTTP synthesis. This Burkholderia cenocepacia (strain HI2424) protein is Thymidylate kinase.